The primary structure comprises 139 residues: Trafficking protein particle complex subunit 2-like protein (139 aa).

The protein belongs to the TRAPP small subunits family. Sedlin subfamily.

It localises to the cytoplasm. Its subcellular location is the perinuclear region. It is found in the endoplasmic reticulum. The protein localises to the golgi apparatus. Its function is as follows. May play a role in vesicular transport from endoplasmic reticulum to Golgi. This Taeniopygia guttata (Zebra finch) protein is Trafficking protein particle complex subunit 2-like protein (TRAPPC2L).